The primary structure comprises 485 residues: GTPase Der (485 aa).

2 EngA-type G domains span residues 3–167 and 176–349; these read PTIA…PEPE and PVFA…NAAM. Residues 9–16, 56–60, 119–122, 182–189, 229–233, and 294–297 each bind GTP; these read GRPNVGKS, DTGGF, NKGE, DTAGV, and NKWD. Residues 350 to 434 enclose the KH-like domain; the sequence is IKMPTPKITR…PLRIQYNVSE (85 aa). The interval 435–485 is disordered; sequence NPYENAEDKPKKKPLRRVSLSNRIEKREGRKEEKNRFKKKTKVSVKKQFSK. Positions 457–469 are enriched in basic and acidic residues; sequence RIEKREGRKEEKN. Residues 470-485 are compositionally biased toward basic residues; that stretch reads RFKKKTKVSVKKQFSK.

This sequence belongs to the TRAFAC class TrmE-Era-EngA-EngB-Septin-like GTPase superfamily. EngA (Der) GTPase family. As to quaternary structure, associates with the 50S ribosomal subunit.

Its function is as follows. GTPase that plays an essential role in the late steps of ribosome biogenesis. This chain is GTPase Der, found in Neisseria meningitidis serogroup B (strain ATCC BAA-335 / MC58).